Reading from the N-terminus, the 431-residue chain is Serine--tRNA ligase (431 aa).

Residues 41–66 form a disordered region; sequence QSRTQELQAERNARSKSIGEAARRGE. 240 to 242 is a binding site for L-serine; that stretch reads TSE. Residue 271 to 273 participates in ATP binding; it reads RSE. Position 294 (Glu294) interacts with L-serine. 358–361 serves as a coordination point for ATP; it reads EISS. L-serine is bound at residue Ser392.

Belongs to the class-II aminoacyl-tRNA synthetase family. Type-1 seryl-tRNA synthetase subfamily. Homodimer. The tRNA molecule binds across the dimer.

It is found in the cytoplasm. It carries out the reaction tRNA(Ser) + L-serine + ATP = L-seryl-tRNA(Ser) + AMP + diphosphate + H(+). The catalysed reaction is tRNA(Sec) + L-serine + ATP = L-seryl-tRNA(Sec) + AMP + diphosphate + H(+). It functions in the pathway aminoacyl-tRNA biosynthesis; selenocysteinyl-tRNA(Sec) biosynthesis; L-seryl-tRNA(Sec) from L-serine and tRNA(Sec): step 1/1. Functionally, catalyzes the attachment of serine to tRNA(Ser). Is also able to aminoacylate tRNA(Sec) with serine, to form the misacylated tRNA L-seryl-tRNA(Sec), which will be further converted into selenocysteinyl-tRNA(Sec). This Aeromonas hydrophila subsp. hydrophila (strain ATCC 7966 / DSM 30187 / BCRC 13018 / CCUG 14551 / JCM 1027 / KCTC 2358 / NCIMB 9240 / NCTC 8049) protein is Serine--tRNA ligase.